The primary structure comprises 128 residues: Ribosome-binding factor A (128 aa).

Belongs to the RbfA family. As to quaternary structure, monomer. Binds 30S ribosomal subunits, but not 50S ribosomal subunits or 70S ribosomes.

It localises to the cytoplasm. One of several proteins that assist in the late maturation steps of the functional core of the 30S ribosomal subunit. Associates with free 30S ribosomal subunits (but not with 30S subunits that are part of 70S ribosomes or polysomes). Required for efficient processing of 16S rRNA. May interact with the 5'-terminal helix region of 16S rRNA. This is Ribosome-binding factor A from Pseudomonas paraeruginosa (strain DSM 24068 / PA7) (Pseudomonas aeruginosa (strain PA7)).